The chain runs to 159 residues: Cell number regulator 4 (159 aa).

The chain crosses the membrane as a helical span at residues 52 to 74 (LAGLLYCLLLHAGVAVVPCHCIY).

This sequence belongs to the cornifelin family. Expressed in roots, coleoptiles, leaves, stalks, apical meristems, immature ears, endosperm, pericarp and tassel spikelets.

Its subcellular location is the membrane. This chain is Cell number regulator 4 (CNR4), found in Zea mays (Maize).